Here is a 466-residue protein sequence, read N- to C-terminus: MPHSYDYDAIVIGSGPGGEGAAMGLVKQGARVAVIERYQNVGGGCTHWGTIPSKALRHAVSRIIEFNQNPLYSDHSRLLRSSFADILNHADNVINQQTRMRQGFYERNHCEILQGNARFVDEHTLVLDCPDGSVETLTAEKFVIACGSRPYHPTDVDFTHPRIYDSDSILSMHHEPRHVLIYGAGVIGCEYASIFRGMDVKVDLINTRDRLLAFLDQEMSDSLSYHFWNSGVVIRHNEEYEKIEGCDDGVIMHLKSGKKLKADCLLYANGRTGNTDSLALQNIGLETDSRGQLKVNSMYQTAQPHVYAVGDVIGYPSLASAAYDQGRIAAQALVKGEATAHLIEDIPTGIYTIPEISSVGKTEQQLTAMKVPYEVGRAQFKHLARAQIVGMNVGTLKILFHRETKEILGIHCFGERAAEIIHIGQAIMEQKGGGNTIEYFVNTTFNYPTMAEAYRVAALNGLNRLF.

36–45 (ERYQNVGGGC) serves as a coordination point for FAD.

This sequence belongs to the class-I pyridine nucleotide-disulfide oxidoreductase family. FAD serves as cofactor.

The protein localises to the cytoplasm. The enzyme catalyses NAD(+) + NADPH = NADH + NADP(+). Functionally, conversion of NADPH, generated by peripheral catabolic pathways, to NADH, which can enter the respiratory chain for energy generation. The protein is Soluble pyridine nucleotide transhydrogenase of Shigella boydii serotype 18 (strain CDC 3083-94 / BS512).